A 741-amino-acid polypeptide reads, in one-letter code: Nuclear pore complex protein Nup88 (741 aa).

Ala-2 carries the post-translational modification N-acetylalanine. Ser-35, Ser-50, Ser-379, Ser-437, Ser-442, and Ser-517 each carry phosphoserine. A Phosphothreonine modification is found at Thr-525. Ser-540 bears the Phosphoserine mark. The stretch at 585–651 (EEIQRRVKLL…KLLHSFHSEL (67 aa)) forms a coiled coil. Phosphoserine is present on Ser-698.

Interacts with NUP214/CAN. Interacts with NUP62 and NUP98. As to expression, ubiquitous.

It localises to the nucleus. It is found in the nuclear pore complex. In terms of biological role, component of nuclear pore complex. The chain is Nuclear pore complex protein Nup88 (NUP88) from Homo sapiens (Human).